We begin with the raw amino-acid sequence, 415 residues long: MKGSYKSRWVIVIVVVIAAIAAFWFWQGRNDSRSAAPGATKQAQQSPAGGRRGMRSGPLAPVQAATAVEQAVPRYLTGLGTITAANTVTVRSRVDGQLIALHFQEGQQVKAGDLLAEIDPSQFKVALAQAQGQLAKDKATLANARRDLARYQQLVKTNLVSRQELDAQQALVSETEGTIKADEASVASAQLQLDWSRITAPVDGRVGLKQVDVGNQISSGDTTGIVVITQTHPIDLVFTLPESDIATVVQAQKAGKPLVVEAWDRTNSKKLSEGTLLSLDNQIDATTGTIKVKARFNNQDDALFPNQFVNARMLVDTEQNAVVIPTAALQMGNEGHFVWVLNSENKVSKHLVTPGIQDSQKVVIRAGISAGDRVVTDGIDRLTEGAKVEVVEAQSATTSEEKATSREYAKKGARS.

The signal sequence occupies residues 1–21 (MKGSYKSRWVIVIVVVIAAIA). Disordered regions lie at residues 32 to 59 (SRSA…SGPL) and 392 to 415 (EAQS…GARS). Residues 399–415 (SEEKATSREYAKKGARS) show a composition bias toward basic and acidic residues.

Belongs to the membrane fusion protein (MFP) (TC 8.A.1) family. Part of a tripartite efflux system composed of MdtA, MdtB and MdtC.

It localises to the cell inner membrane. Its function is as follows. The MdtABC tripartite complex confers resistance against novobiocin and deoxycholate. The polypeptide is Multidrug resistance protein MdtA (Escherichia coli O17:K52:H18 (strain UMN026 / ExPEC)).